The primary structure comprises 406 residues: Odorant receptor 42a (406 aa).

The Cytoplasmic portion of the chain corresponds to 1–44 (MDLRRWFPTLYTQSKDSPVRSRDATLYLLRCVFLMGVRKPPAKF). The chain crosses the membrane as a helical span at residues 45–65 (FVAYVLWSFALNFCSTFYQPI). The Extracellular portion of the chain corresponds to 66 to 86 (GFLTGYISHLSEFSPGEFLTS). Residues 87-107 (LQVAFNAWSCSTKVLIVWALV) traverse the membrane as a helical segment. The Cytoplasmic portion of the chain corresponds to 108–142 (KRFDEANNLLDEMDRRITDPGERLQIHRAVSLSNR). The helical transmembrane segment at 143–163 (IFFFFMAVYMVYATNTFLSAI) threads the bilayer. The Extracellular portion of the chain corresponds to 164–181 (FIGRPPYQNYYPFLDWRS). Residues 182–202 (STLHLALQAGLEYFAMAGACF) traverse the membrane as a helical segment. The Cytoplasmic segment spans residues 203–271 (QDVCVDCYPV…DCLRPVISGT (69 aa)). A helical transmembrane segment spans residues 272 to 292 (IFVQFLVVGLVLGFTLINIVL). Residues 293–298 (FANLGS) lie on the Extracellular side of the membrane. The chain crosses the membrane as a helical span at residues 299–319 (AIAALSFMAAVLLETTPFCIL). Residues 320-359 (CNYLTEDCYKLADALFQSNWIDEEKRYQKTLMYFLQKLQQ) are Cytoplasmic-facing. A helical transmembrane segment spans residues 360–380 (PITFMAMNVFPISVGTNISVT). Residues 381–406 (KFSFSVFTLVKQMNISEKLAKSEMEE) lie on the Extracellular side of the membrane. Residue Asn-394 is glycosylated (N-linked (GlcNAc...) asparagine).

This sequence belongs to the insect chemoreceptor superfamily. Heteromeric odorant receptor channel (TC 1.A.69) family. Or2a subfamily. Interacts with Orco. Complexes exist early in the endomembrane system in olfactory sensory neurons (OSNs), coupling these complexes to the conserved ciliary trafficking pathway.

It is found in the cell membrane. Odorant receptor which mediates acceptance or avoidance behavior, depending on its substrates. The odorant receptor repertoire encodes a large collection of odor stimuli that vary widely in identity, intensity, and duration. May form a complex with Orco to form odorant-sensing units, providing sensitive and prolonged odorant signaling and calcium permeability. Involved in the behavioral responses to butanol, ethyl acetate, propyl acetate, and pentyl acetate. Also responds to pyrazines. This Drosophila melanogaster (Fruit fly) protein is Odorant receptor 42a (Or42a).